Consider the following 469-residue polypeptide: UDP-N-acetylmuramoylalanine--D-glutamate ligase (469 aa).

125-131 contributes to the ATP binding site; that stretch reads GTNGKTT.

Belongs to the MurCDEF family.

It is found in the cytoplasm. The enzyme catalyses UDP-N-acetyl-alpha-D-muramoyl-L-alanine + D-glutamate + ATP = UDP-N-acetyl-alpha-D-muramoyl-L-alanyl-D-glutamate + ADP + phosphate + H(+). The protein operates within cell wall biogenesis; peptidoglycan biosynthesis. Functionally, cell wall formation. Catalyzes the addition of glutamate to the nucleotide precursor UDP-N-acetylmuramoyl-L-alanine (UMA). This is UDP-N-acetylmuramoylalanine--D-glutamate ligase from Prochlorococcus marinus (strain NATL2A).